Reading from the N-terminus, the 401-residue chain is S-adenosylmethionine synthase (401 aa).

136–141 (GQGSVD) lines the ATP pocket.

It belongs to the AdoMet synthase 2 family. Mg(2+) serves as cofactor.

It catalyses the reaction L-methionine + ATP + H2O = S-adenosyl-L-methionine + phosphate + diphosphate. It participates in amino-acid biosynthesis; S-adenosyl-L-methionine biosynthesis; S-adenosyl-L-methionine from L-methionine: step 1/1. Its function is as follows. Catalyzes the formation of S-adenosylmethionine from methionine and ATP. In Pyrococcus furiosus (strain ATCC 43587 / DSM 3638 / JCM 8422 / Vc1), this protein is S-adenosylmethionine synthase.